The primary structure comprises 309 residues: Protein FdhE (309 aa).

Belongs to the FdhE family.

The protein localises to the cytoplasm. Functionally, necessary for formate dehydrogenase activity. This chain is Protein FdhE, found in Escherichia coli O9:H4 (strain HS).